The following is a 274-amino-acid chain: 16S rRNA (guanine(1405)-N(7))-methyltransferase (274 aa).

S-adenosyl-L-methionine contacts are provided by residues 102–108 (HISTRER), Ala-133, Asp-156, 182–183 (DL), Leu-198, and Gln-207.

Belongs to the methyltransferase superfamily. Aminoglycoside resistance family.

The enzyme catalyses guanosine(1405) in 16S rRNA + S-adenosyl-L-methionine = N(7)-methylguanosine(1405) in 16S rRNA + S-adenosyl-L-homocysteine. In terms of biological role, specifically methylates the N(7) position of guanine 1405 in 16S rRNA. Confers resistance to various aminoglycosides, including gentamicin, kanamycin and sisomicin. The chain is 16S rRNA (guanine(1405)-N(7))-methyltransferase (sgm) from Micromonospora zionensis.